Consider the following 221-residue polypeptide: Serine/arginine-rich splicing factor 2 (221 aa).

N-acetylserine is present on serine 2. Serine 2 is modified (phosphoserine). In terms of domain architecture, RRM spans 14-92 (TSLKVDNLTY…RELRVQMARY (79 aa)). Phosphothreonine occurs at positions 22 and 25. Phosphoserine is present on serine 26. At lysine 52 the chain carries N6-acetyllysine. Residues 92 to 221 (YGRPPDSHHS…SPEEEGAVSS (130 aa)) are disordered. 2 stretches are compositionally biased toward basic residues: residues 117 to 171 (RRSR…RSKS) and 179 to 189 (SRSRSRSRSRS). Residues serine 189, serine 191, serine 204, serine 206, serine 208, serine 212, and serine 220 each carry the phosphoserine modification. Acidic residues predominate over residues 212–221 (SPEEEGAVSS).

Belongs to the splicing factor SR family. In terms of assembly, in vitro, self-associates and binds SRSF1/SFRS1 (ASF/SF2), SNRP70 and U2AF1 but not U2AF2. Binds SREK1/SFRS12. Interacts with CCNL1 and CCNL2. Interacts with SCAF11. Interacts with ZRSR2/U2AF1-RS2. Interacts with CCDC55 (via C-terminus). Interacts with BRDT. Post-translationally, extensively phosphorylated on serine residues in the RS domain. Phosphorylated by SRPK2 and this causes its redistribution from the nuclear speckle to nucleoplasm and controls cell fate decision in response to cisplatin treatment. KAT5/TIP60 inhibits its phosphorylation by preventing SRPK2 nuclear translocation. In terms of processing, acetylation on Lys-52 by KAT5/TIP60 promotes its proteasomal degradation. This effect is counterbalanced by HDAC6, which positively controls SRSF2 protein level by deacetylating it and preventing its proteasomal degradation.

Its subcellular location is the nucleus. The protein resides in the nucleoplasm. It is found in the nucleus speckle. Its function is as follows. Necessary for the splicing of pre-mRNA. It is required for formation of the earliest ATP-dependent splicing complex and interacts with spliceosomal components bound to both the 5'- and 3'-splice sites during spliceosome assembly. It also is required for ATP-dependent interactions of both U1 and U2 snRNPs with pre-mRNA. Interacts with other spliceosomal components, via the RS domains, to form a bridge between the 5'- and 3'-splice site binding components, U1 snRNP and U2AF. Binds to purine-rich RNA sequences, either 5'-AGSAGAGTA-3' (S=C or G) or 5'-GTTCGAGTA-3'. Can bind to beta-globin mRNA and commit it to the splicing pathway. The phosphorylated form (by SRPK2) is required for cellular apoptosis in response to cisplatin treatment. The polypeptide is Serine/arginine-rich splicing factor 2 (SRSF2) (Pan troglodytes (Chimpanzee)).